The primary structure comprises 256 residues: Pyridoxine 5'-phosphate synthase (256 aa).

Asparagine 12 provides a ligand contact to 3-amino-2-oxopropyl phosphate. Residue aspartate 14–histidine 15 participates in 1-deoxy-D-xylulose 5-phosphate binding. A 3-amino-2-oxopropyl phosphate-binding site is contributed by arginine 23. Histidine 48 serves as the catalytic Proton acceptor. The 1-deoxy-D-xylulose 5-phosphate site is built by arginine 50 and histidine 55. The active-site Proton acceptor is the glutamate 75. A 1-deoxy-D-xylulose 5-phosphate-binding site is contributed by threonine 105. Histidine 199 acts as the Proton donor in catalysis. Residues glycine 200 and glycine 221–tyrosine 222 contribute to the 3-amino-2-oxopropyl phosphate site.

This sequence belongs to the PNP synthase family. As to quaternary structure, homooctamer; tetramer of dimers.

It is found in the cytoplasm. The enzyme catalyses 3-amino-2-oxopropyl phosphate + 1-deoxy-D-xylulose 5-phosphate = pyridoxine 5'-phosphate + phosphate + 2 H2O + H(+). The protein operates within cofactor biosynthesis; pyridoxine 5'-phosphate biosynthesis; pyridoxine 5'-phosphate from D-erythrose 4-phosphate: step 5/5. Functionally, catalyzes the complicated ring closure reaction between the two acyclic compounds 1-deoxy-D-xylulose-5-phosphate (DXP) and 3-amino-2-oxopropyl phosphate (1-amino-acetone-3-phosphate or AAP) to form pyridoxine 5'-phosphate (PNP) and inorganic phosphate. The protein is Pyridoxine 5'-phosphate synthase of Bradyrhizobium sp. (strain ORS 278).